Consider the following 663-residue polypeptide: LEAF RUST 10 DISEASE-RESISTANCE LOCUS RECEPTOR-LIKE PROTEIN KINASE-like 1.4 (663 aa).

The first 25 residues, 1-25 (MYYPLSSSLMFFILFSLFYHLPCES), serve as a signal peptide directing secretion. Over 26 to 241 (SKCESLFQCG…TSLSIGAKAG (216 aa)) the chain is Extracellular. N-linked (GlcNAc...) asparagine glycosylation is found at asparagine 36, asparagine 64, asparagine 106, asparagine 137, and asparagine 208. The chain crosses the membrane as a helical span at residues 242 to 262 (IAVASVSGLAILLLAGLFLCI). Topologically, residues 263 to 663 (RRRRKTQDAQ…TSSSDTAASL (401 aa)) are cytoplasmic. The disordered stretch occupies residues 282-304 (SYSSRDTSRNPTSTTISSSSNHS). Residues 290-304 (RNPTSTTISSSSNHS) show a composition bias toward low complexity. The region spanning 334–609 (ENFSRELGDG…DEIVEILRGI (276 aa)) is the Protein kinase domain. ATP contacts are provided by residues 340-348 (LGDGGFGTV) and lysine 362. Aspartate 458 (proton acceptor) is an active-site residue. The tract at residues 637–663 (LLRNSVPPPISPETDKWTSSSDTAASL) is disordered. Polar residues predominate over residues 653-663 (WTSSSDTAASL).

Belongs to the protein kinase superfamily. Ser/Thr protein kinase family.

It localises to the cell membrane. The catalysed reaction is L-seryl-[protein] + ATP = O-phospho-L-seryl-[protein] + ADP + H(+). The enzyme catalyses L-threonyl-[protein] + ATP = O-phospho-L-threonyl-[protein] + ADP + H(+). The polypeptide is LEAF RUST 10 DISEASE-RESISTANCE LOCUS RECEPTOR-LIKE PROTEIN KINASE-like 1.4 (Arabidopsis thaliana (Mouse-ear cress)).